Here is a 91-residue protein sequence, read N- to C-terminus: Small ribosomal subunit protein bS18 (91 aa).

It belongs to the bacterial ribosomal protein bS18 family. As to quaternary structure, part of the 30S ribosomal subunit. Forms a tight heterodimer with protein bS6.

Its function is as follows. Binds as a heterodimer with protein bS6 to the central domain of the 16S rRNA, where it helps stabilize the platform of the 30S subunit. In Burkholderia ambifaria (strain MC40-6), this protein is Small ribosomal subunit protein bS18.